The sequence spans 376 residues: MSCEVLALTEELINRQSVTPEDAGCQQLMAEYLAPLGFDIESMVFDDTTNMWARKGTGGPVFCFAGHTDVVPSGPAEKWTFPPFTATQHEGQLYGRGAADMKGSLAAMLVATKAFVTKHPEHSGSIAFLITSDEEGPFINGTTRVIDTLEARNEKMTWCLVGEPSSTTLIGDVVKNGRRGSLTGDITVKGVQGHVAYPHLAKNPIHLSAPAFAELAQTHWDSGNASFPPTSFQVSNINSGTGAGNVIPGDLSACFNFRFSTEVTDKQLIERVTTILDKYDFDYHIDWTFNGQPFLTDSGKLVEATQSAIKDVTGRETELSTAGGTSDGRFIAPTGAQVIELGPINATIHKIDENVNINDLAQLAKIYEGILQRLLA.

Histidine 67 provides a ligand contact to Zn(2+). Aspartate 69 is a catalytic residue. Aspartate 100 contacts Zn(2+). The active-site Proton acceptor is glutamate 134. Positions 135, 163, and 349 each coordinate Zn(2+).

Belongs to the peptidase M20A family. DapE subfamily. As to quaternary structure, homodimer. The cofactor is Zn(2+). It depends on Co(2+) as a cofactor.

It catalyses the reaction N-succinyl-(2S,6S)-2,6-diaminopimelate + H2O = (2S,6S)-2,6-diaminopimelate + succinate. The protein operates within amino-acid biosynthesis; L-lysine biosynthesis via DAP pathway; LL-2,6-diaminopimelate from (S)-tetrahydrodipicolinate (succinylase route): step 3/3. Functionally, catalyzes the hydrolysis of N-succinyl-L,L-diaminopimelic acid (SDAP), forming succinate and LL-2,6-diaminopimelate (DAP), an intermediate involved in the bacterial biosynthesis of lysine and meso-diaminopimelic acid, an essential component of bacterial cell walls. The protein is Succinyl-diaminopimelate desuccinylase of Pseudoalteromonas atlantica (strain T6c / ATCC BAA-1087).